The primary structure comprises 1450 residues: Sister chromatid cohesion protein PDS5 homolog (1450 aa).

Disordered stretches follow at residues 1–145 (MATR…KETK), 680–707 (VGGS…QQQQ), and 1340–1450 (LPPL…EVEN). Acidic residues predominate over residues 45–59 (DDGELDSDIDEEDES). The segment covering 77 to 138 (KTQQQPQKSI…TSSSSQQSTQ (62 aa)) has biased composition (low complexity). A coiled-coil region spans residues 650-716 (KQLFKKYLEE…QLQQPENDIE (67 aa)). Over residues 682–691 (GSTTPTSKKS) the composition is skewed to polar residues. Low complexity-rich tracts occupy residues 692–707 (QPPQ…QQQQ) and 1350–1363 (NNNN…STNN). A compositionally biased stretch (basic and acidic residues) spans 1369–1378 (DENNNNKNDN). The segment covering 1387 to 1401 (NSTTAVPQKSIISKP) has biased composition (low complexity). The segment covering 1402-1427 (PAKKVSKKAAAKQKSPKKKTNKKKKQ) has biased composition (basic residues). A compositionally biased stretch (acidic residues) spans 1430–1450 (SEEEVSSSEEEDESQDEEVEN).

This sequence belongs to the PDS5 family.

It is found in the nucleus. May regulate sister chromatid cohesion during mitosis and couple it to DNA replication. In Dictyostelium discoideum (Social amoeba), this protein is Sister chromatid cohesion protein PDS5 homolog.